Reading from the N-terminus, the 367-residue chain is 3-dehydroquinate synthase (367 aa).

NAD(+) contacts are provided by residues 69–74 (DGEAFK), 103–107 (GVIGD), 127–128 (TT), lysine 140, and lysine 149. Zn(2+)-binding residues include glutamate 182, histidine 245, and histidine 262.

The protein belongs to the sugar phosphate cyclases superfamily. Dehydroquinate synthase family. Co(2+) is required as a cofactor. The cofactor is Zn(2+). Requires NAD(+) as cofactor.

The protein resides in the cytoplasm. The catalysed reaction is 7-phospho-2-dehydro-3-deoxy-D-arabino-heptonate = 3-dehydroquinate + phosphate. It participates in metabolic intermediate biosynthesis; chorismate biosynthesis; chorismate from D-erythrose 4-phosphate and phosphoenolpyruvate: step 2/7. In terms of biological role, catalyzes the conversion of 3-deoxy-D-arabino-heptulosonate 7-phosphate (DAHP) to dehydroquinate (DHQ). The sequence is that of 3-dehydroquinate synthase from Pseudomonas syringae pv. syringae (strain B728a).